Consider the following 575-residue polypeptide: 4-substituted benzoates-glutamate ligase GH3.12 (575 aa).

Residues aspartate 6–isoleucine 33 are a coiled coil. Serine 95–serine 96 contributes to the AMP binding site. A salicylate-binding site is contributed by tyrosine 120–arginine 123. Threonine 301, threonine 324, serine 328, tyrosine 347, aspartate 398, and arginine 417 together coordinate AMP.

It belongs to the IAA-amido conjugating enzyme family. As to quaternary structure, interacts with the P.syringae pv. maculicola effector HopW1-1 (via C-terminus). Expressed in seedlings, mostly in cotyledons, leaves, hypocotyls and sporadically in roots. Not detected in unchallenged adult plants, except in flowers.

With respect to regulation, specifically and reversibly inhibited by salicylic acid (SA). Functionally, catalyzes the conjugation of specific amino acids (e.g. Glu and possibly His, Lys, and Met) to their preferred acyl substrates (e.g. 4-substituted benzoates), in a magnesium ion- and ATP-dependent manner. Can use 4-substituted benzoates such as 4-aminobenzoate (pABA), 4-fluorobenzoate and 4-hydroxybenzoate (4-HBA), and, to a lesser extent, benzoate, vanillate and trans-cinnamate, but not 2-substituted benzoates and salicylic acid (SA), as conjugating acyl substrates. Involved in both basal and induced resistance in a SA-dependent manner. Confers resistance to virulent and avirulent pathogens (at least bacteria and oomycetes), and promotes SA glucosides accumulation. Required for the establishment of hyper-sensitive response (HR) upon incompatible interaction and subsequent systemic acquired resistance (SAR). This Arabidopsis thaliana (Mouse-ear cress) protein is 4-substituted benzoates-glutamate ligase GH3.12 (GH3.12).